Reading from the N-terminus, the 490-residue chain is Glutamyl-tRNA(Gln) amidotransferase subunit A (490 aa).

Catalysis depends on charge relay system residues K78 and S153. S177 serves as the catalytic Acyl-ester intermediate.

This sequence belongs to the amidase family. GatA subfamily. Heterotrimer of A, B and C subunits.

The enzyme catalyses L-glutamyl-tRNA(Gln) + L-glutamine + ATP + H2O = L-glutaminyl-tRNA(Gln) + L-glutamate + ADP + phosphate + H(+). Functionally, allows the formation of correctly charged Gln-tRNA(Gln) through the transamidation of misacylated Glu-tRNA(Gln) in organisms which lack glutaminyl-tRNA synthetase. The reaction takes place in the presence of glutamine and ATP through an activated gamma-phospho-Glu-tRNA(Gln). This chain is Glutamyl-tRNA(Gln) amidotransferase subunit A, found in Bdellovibrio bacteriovorus (strain ATCC 15356 / DSM 50701 / NCIMB 9529 / HD100).